The following is a 467-amino-acid chain: MATEYALRMGDGKRVFLTKEKIMAEIEAGTANAADLGDIPALNDNEMDKLAEILMMPGKTVSVEQGMEIPVTHDIGTIRLDGDQGNSGVGIPSSRLVGCMMHERAFGADTMELGHIDYSFKPVKPVVSNECQAMEVCQQNMIIPLFYGAMPNMGLYYTPDGPFENPGDLMKLFKIDKAKESMEHAAEHLTRDTVWVMQKLFASGADGVNFDTTGAAGDGDMYGTLYAIQALRKEFPDMYIEAGMAGEMVLGMHGELEYDGVRLAGSWPHEQAPLIAKAGANVFGPVCNTNTSKTSAWNLARAVTFIKAAVEASPIPCHVNMGMGVGGIPMLETPPIDAVTRASKAMVEIAGVDGIOIGVGDPMGMPISHIMASGMTGIRAAGDLVARMEFSKNMRIGEAKEYVAKKLGVDKMDLVDEHVMRELREELDIGIITSVPGAAKGIAAKMNIEKLLDIKINSCNLFRKQIA.

Position 356 (pyrrolysine 356) is a non-standard amino acid, pyrrolysine.

This sequence belongs to the dimethylamine methyltransferase family.

It carries out the reaction Co(I)-[dimethylamine-specific corrinoid protein] + dimethylamine + H(+) = methyl-Co(III)-[dimethylamine-specific corrinoid protein] + methylamine. Its pathway is one-carbon metabolism; methanogenesis from dimethylamine. Functionally, catalyzes the transfer of a methyl group from dimethylamine to the corrinoid cofactor of MtbC. The protein is Dimethylamine methyltransferase MtbB2 (mtbB2) of Methanosarcina barkeri (strain Fusaro / DSM 804).